The primary structure comprises 189 residues: Interleukin-23 subunit alpha (189 aa).

The first 19 residues, 1–19 (MLGSTAVMLLLLLPWTAQT), serve as a signal peptide directing secretion.

This sequence belongs to the IL-6 superfamily. In terms of assembly, heterodimer with IL12B; disulfide-linked. The heterodimer is known as interleukin IL-23. Interacts with IL23R; this interaction enables recruitment of IL12RB1.

Its subcellular location is the secreted. Its function is as follows. Associates with IL12B to form the pro-inflammatory cytokine IL-23 that plays different roles in innate and adaptive immunity. Released by antigen-presenting cells such as dendritic cells or macrophages, binds to a heterodimeric receptor complex composed of IL12RB1 and IL23R to activate JAK2 and TYK2 which then phosphorylate the receptor to form a docking site leading to the phosphorylation of STAT3 and STAT4. This process leads to activation of several pathways including p38 MAPK or NF-kappa-B and promotes the production of pro-inflammatory cytokines such as interleukin-17A/IL17A. In turn, participates in the early and effective intracellular bacterial clearance. Promotes the expansion and survival of T-helper 17 cells, a CD4-positive helper T-cell subset that produces IL-17, as well as other IL-17-producing cells. The sequence is that of Interleukin-23 subunit alpha (IL23A) from Cavia porcellus (Guinea pig).